The primary structure comprises 548 residues: Membrane protein insertase YidC (548 aa).

The helical transmembrane segment at 6–26 threads the bilayer; it reads NLLVIALLFVSFMIWQAWEQD. The segment at 28 to 56 is disordered; the sequence is NPQPQTQQTTQTTTTAAGSAADQGVPASG. Residues 29-42 are compositionally biased toward low complexity; sequence PQPQTQQTTQTTTT. A run of 4 helical transmembrane segments spans residues 350 to 370, 424 to 444, 458 to 478, and 499 to 519; these read FVGNWGFSIIIITFIVRGIMY, FPLIIQMPIFLALYYMLMGSI, LSAQDPYYILPILMGVTMFFI, and PVIFTVFFLWFPSGLVLYYIV.

It belongs to the OXA1/ALB3/YidC family. Type 1 subfamily. As to quaternary structure, interacts with the Sec translocase complex via SecD. Specifically interacts with transmembrane segments of nascent integral membrane proteins during membrane integration.

Its subcellular location is the cell inner membrane. Functionally, required for the insertion and/or proper folding and/or complex formation of integral membrane proteins into the membrane. Involved in integration of membrane proteins that insert both dependently and independently of the Sec translocase complex, as well as at least some lipoproteins. Aids folding of multispanning membrane proteins. This Salmonella paratyphi C (strain RKS4594) protein is Membrane protein insertase YidC.